The following is a 251-amino-acid chain: tRNA1(Val) (adenine(37)-N6)-methyltransferase (251 aa).

Belongs to the methyltransferase superfamily. tRNA (adenine-N(6)-)-methyltransferase family.

The protein localises to the cytoplasm. The catalysed reaction is adenosine(37) in tRNA1(Val) + S-adenosyl-L-methionine = N(6)-methyladenosine(37) in tRNA1(Val) + S-adenosyl-L-homocysteine + H(+). Its function is as follows. Specifically methylates the adenine in position 37 of tRNA(1)(Val) (anticodon cmo5UAC). The chain is tRNA1(Val) (adenine(37)-N6)-methyltransferase from Shewanella frigidimarina (strain NCIMB 400).